The primary structure comprises 161 residues: 3-isopropylmalate dehydratase small subunit (161 aa).

The protein belongs to the LeuD family. LeuD type 2 subfamily. Heterodimer of LeuC and LeuD.

The catalysed reaction is (2R,3S)-3-isopropylmalate = (2S)-2-isopropylmalate. Its pathway is amino-acid biosynthesis; L-leucine biosynthesis; L-leucine from 3-methyl-2-oxobutanoate: step 2/4. Catalyzes the isomerization between 2-isopropylmalate and 3-isopropylmalate, via the formation of 2-isopropylmaleate. This Clostridium beijerinckii (strain ATCC 51743 / NCIMB 8052) (Clostridium acetobutylicum) protein is 3-isopropylmalate dehydratase small subunit.